The chain runs to 239 residues: Large ribosomal subunit protein uL2 (239 aa).

The tract at residues 200 to 239 is disordered; the sequence is VNHPHGGKEHHIGRPSTVSRRAPPGRKVGHIAARRTGRRK. A compositionally biased stretch (basic residues) spans 222-239; it reads PPGRKVGHIAARRTGRRK.

The protein belongs to the universal ribosomal protein uL2 family. As to quaternary structure, part of the 50S ribosomal subunit. Forms a bridge to the 30S subunit in the 70S ribosome.

Functionally, one of the primary rRNA binding proteins. Required for association of the 30S and 50S subunits to form the 70S ribosome, for tRNA binding and peptide bond formation. It has been suggested to have peptidyltransferase activity; this is somewhat controversial. Makes several contacts with the 16S rRNA in the 70S ribosome. The polypeptide is Large ribosomal subunit protein uL2 (Thermococcus kodakarensis (strain ATCC BAA-918 / JCM 12380 / KOD1) (Pyrococcus kodakaraensis (strain KOD1))).